A 327-amino-acid chain; its full sequence is Interleukin-12 subunit beta (327 aa).

The first 22 residues, 1 to 22 (MHPQQLVVSWFSLVLLASPIVA), serve as a signal peptide directing secretion. The region spanning 23–106 (IWELEKNVYV…LSRSLLLLHK (84 aa)) is the Ig-like C2-type domain. An intrachain disulfide couples Cys-50 to Cys-90. The N-linked (GlcNAc...) asparagine glycan is linked to Asn-223. A Fibronectin type-III domain is found at 238–327 (PPKNLQLRPL…WSEWASVSCS (90 aa)).

It belongs to the IL-12B family. Heterodimer with IL12A; disulfide-linked. The heterodimer is known as interleukin IL-12. Heterodimer with IL23A; disulfide-linked. The heterodimer is known as interleukin IL-23. Also secreted as a monomer. Interacts with NBR1; this interaction promotes IL-12 secretion.

The protein resides in the secreted. In terms of biological role, cytokine that can act as a growth factor for activated T and NK cells, enhance the lytic activity of NK/lymphokine-activated killer cells, and stimulate the production of IFN-gamma by resting PBMC. Its function is as follows. Associates with IL23A to form the IL-23 interleukin, a heterodimeric cytokine which functions in innate and adaptive immunity. IL-23 may constitute with IL-17 an acute response to infection in peripheral tissues. IL-23 binds to a heterodimeric receptor complex composed of IL12RB1 and IL23R, activates the Jak-Stat signaling cascade, stimulates memory rather than naive T-cells and promotes production of pro-inflammatory cytokines. IL-23 induces autoimmune inflammation and thus may be responsible for autoimmune inflammatory diseases and may be important for tumorigenesis. The sequence is that of Interleukin-12 subunit beta (IL12B) from Capra hircus (Goat).